The sequence spans 319 residues: ATP-dependent 6-phosphofructokinase (319 aa).

ATP is bound at residue G11. 21–25 (RAVVR) contacts ADP. Residues 72-73 (RC) and 102-105 (GDGS) contribute to the ATP site. Residue D103 participates in Mg(2+) binding. Residue 125 to 127 (TID) participates in substrate binding. The active-site Proton acceptor is D127. An ADP-binding site is contributed by R154. Residues R162 and 169–171 (MGR) contribute to the substrate site. Residues 185-187 (GAE), R211, and 213-215 (KKH) each bind ADP. Substrate contacts are provided by residues E222, R243, and 249-252 (HIQR).

It belongs to the phosphofructokinase type A (PFKA) family. ATP-dependent PFK group I subfamily. Prokaryotic clade 'B1' sub-subfamily. As to quaternary structure, homotetramer. The cofactor is Mg(2+).

It localises to the cytoplasm. The catalysed reaction is beta-D-fructose 6-phosphate + ATP = beta-D-fructose 1,6-bisphosphate + ADP + H(+). It functions in the pathway carbohydrate degradation; glycolysis; D-glyceraldehyde 3-phosphate and glycerone phosphate from D-glucose: step 3/4. With respect to regulation, allosterically activated by ADP and other diphosphonucleosides, and allosterically inhibited by phosphoenolpyruvate. Functionally, catalyzes the phosphorylation of D-fructose 6-phosphate to fructose 1,6-bisphosphate by ATP, the first committing step of glycolysis. The protein is ATP-dependent 6-phosphofructokinase of Bacillus velezensis (strain DSM 23117 / BGSC 10A6 / LMG 26770 / FZB42) (Bacillus amyloliquefaciens subsp. plantarum).